A 240-amino-acid chain; its full sequence is Probable transcriptional regulatory protein Csal_0810 (240 aa).

The protein belongs to the TACO1 family.

Its subcellular location is the cytoplasm. The polypeptide is Probable transcriptional regulatory protein Csal_0810 (Chromohalobacter salexigens (strain ATCC BAA-138 / DSM 3043 / CIP 106854 / NCIMB 13768 / 1H11)).